A 121-amino-acid polypeptide reads, in one-letter code: Large ribosomal subunit protein bL19 (121 aa).

The protein belongs to the bacterial ribosomal protein bL19 family.

This protein is located at the 30S-50S ribosomal subunit interface and may play a role in the structure and function of the aminoacyl-tRNA binding site. The chain is Large ribosomal subunit protein bL19 from Chlamydia caviae (strain ATCC VR-813 / DSM 19441 / 03DC25 / GPIC) (Chlamydophila caviae).